We begin with the raw amino-acid sequence, 163 residues long: 6,7-dimethyl-8-ribityllumazine synthase (163 aa).

Residues F27, 58-60 (ALE), and 87-89 (CVV) each bind 5-amino-6-(D-ribitylamino)uracil. 92-93 (DT) is a (2S)-2-hydroxy-3-oxobutyl phosphate binding site. H95 serves as the catalytic Proton donor. N120 lines the 5-amino-6-(D-ribitylamino)uracil pocket. R134 is a (2S)-2-hydroxy-3-oxobutyl phosphate binding site.

This sequence belongs to the DMRL synthase family.

The enzyme catalyses (2S)-2-hydroxy-3-oxobutyl phosphate + 5-amino-6-(D-ribitylamino)uracil = 6,7-dimethyl-8-(1-D-ribityl)lumazine + phosphate + 2 H2O + H(+). It functions in the pathway cofactor biosynthesis; riboflavin biosynthesis; riboflavin from 2-hydroxy-3-oxobutyl phosphate and 5-amino-6-(D-ribitylamino)uracil: step 1/2. Catalyzes the formation of 6,7-dimethyl-8-ribityllumazine by condensation of 5-amino-6-(D-ribitylamino)uracil with 3,4-dihydroxy-2-butanone 4-phosphate. This is the penultimate step in the biosynthesis of riboflavin. This chain is 6,7-dimethyl-8-ribityllumazine synthase, found in Nitrobacter winogradskyi (strain ATCC 25391 / DSM 10237 / CIP 104748 / NCIMB 11846 / Nb-255).